A 445-amino-acid polypeptide reads, in one-letter code: Tubulin beta-4 chain (445 aa).

GTP-binding residues include Gln11, Glu69, Ser138, Gly142, Thr143, Gly144, Asn204, and Asn226. Glu69 provides a ligand contact to Mg(2+). The segment at 421–445 (EYQQYQDATADEEYDEEEEEERDAE) is disordered. Residues 429–445 (TADEEYDEEEEEERDAE) are compositionally biased toward acidic residues.

It belongs to the tubulin family. As to quaternary structure, dimer of alpha and beta chains. A typical microtubule is a hollow water-filled tube with an outer diameter of 25 nm and an inner diameter of 15 nM. Alpha-beta heterodimers associate head-to-tail to form protofilaments running lengthwise along the microtubule wall with the beta-tubulin subunit facing the microtubule plus end conferring a structural polarity. Microtubules usually have 13 protofilaments but different protofilament numbers can be found in some organisms and specialized cells. The cofactor is Mg(2+).

It localises to the cytoplasm. The protein localises to the cytoskeleton. Its function is as follows. Tubulin is the major constituent of microtubules, a cylinder consisting of laterally associated linear protofilaments composed of alpha- and beta-tubulin heterodimers. Microtubules grow by the addition of GTP-tubulin dimers to the microtubule end, where a stabilizing cap forms. Below the cap, tubulin dimers are in GDP-bound state, owing to GTPase activity of alpha-tubulin. This Triticum aestivum (Wheat) protein is Tubulin beta-4 chain (TUBB4).